The chain runs to 231 residues: ATP-dependent dethiobiotin synthetase BioD 2 (231 aa).

An ATP-binding site is contributed by 13-18 (SVGKTV). T17 serves as a coordination point for Mg(2+). The active site involves K38. ATP is bound by residues D55, 112 to 115 (EGTG), 172 to 173 (NR), 201 to 203 (PYL), and Q208. 2 residues coordinate Mg(2+): D55 and E112.

This sequence belongs to the dethiobiotin synthetase family. Homodimer. The cofactor is Mg(2+).

It is found in the cytoplasm. The catalysed reaction is (7R,8S)-7,8-diammoniononanoate + CO2 + ATP = (4R,5S)-dethiobiotin + ADP + phosphate + 3 H(+). It functions in the pathway cofactor biosynthesis; biotin biosynthesis; biotin from 7,8-diaminononanoate: step 1/2. Its function is as follows. Catalyzes a mechanistically unusual reaction, the ATP-dependent insertion of CO2 between the N7 and N8 nitrogen atoms of 7,8-diaminopelargonic acid (DAPA, also called 7,8-diammoniononanoate) to form a ureido ring. The polypeptide is ATP-dependent dethiobiotin synthetase BioD 2 (Salmonella typhi).